The sequence spans 112 residues: UPF0235 protein Atu2660 (112 aa).

Belongs to the UPF0235 family.

The protein is UPF0235 protein Atu2660 of Agrobacterium fabrum (strain C58 / ATCC 33970) (Agrobacterium tumefaciens (strain C58)).